Reading from the N-terminus, the 312-residue chain is Mas-related G-protein coupled receptor member E (312 aa).

The Extracellular segment spans residues 1–20 (MMEPREAGQHVGAANGAQED). The helical transmembrane segment at 21 to 41 (VAFNLIILSLTEGLGLGGLLG) threads the bilayer. Residues 42–59 (NGAVLWLLSSNVYRNPFA) lie on the Cytoplasmic side of the membrane. A helical membrane pass occupies residues 60 to 80 (IYLLDVACADLIFLGCHMVAI). The Extracellular segment spans residues 81 to 106 (VPDLLQGRLDFPGFVQTSLATLRFFC). The chain crosses the membrane as a helical span at residues 107–127 (YIVGLSLLAAVSVEQCLAALF). At 128–141 (PAWYSCRRPRHLTT) the chain is on the cytoplasmic side. Residues 142-162 (CVCALTWALCLLLHLLLSGAC) traverse the membrane as a helical segment. The Extracellular portion of the chain corresponds to 163 to 176 (TQFFGEPSRHLCRT). Residues 177–197 (LWLVAAVLLALLCCTMCGASL) traverse the membrane as a helical segment. At 198 to 217 (MLLLRVERGPQRPPPRGFPG) the chain is on the cytoplasmic side. A helical membrane pass occupies residues 218-238 (LILLTVLLFLFCGLPFGIYWL). Topologically, residues 239–241 (SRN) are extracellular. A helical membrane pass occupies residues 242–262 (LLWYIPHYFYHFSFLMAAVHC). Residues 263–312 (AAKPVVYFCLGSAQGRRLPLRLVLQRALGDEAELGAVRETSRRGLVDIAA) are Cytoplasmic-facing.

The protein belongs to the G-protein coupled receptor 1 family. Mas subfamily.

It localises to the cell membrane. Its function is as follows. Orphan receptor. May regulate nociceptor function and/or development, including the sensation or modulation of pain. This is Mas-related G-protein coupled receptor member E (MRGPRE) from Homo sapiens (Human).